The following is a 581-amino-acid chain: Semenogelin-2 (581 aa).

An N-terminal signal peptide occupies residues 1–23 (MKSIILFVLSLLLILEKQAAVMG). Disordered regions lie at residues 24 to 62 (QKGG…SKGS), 132 to 157 (GGKA…GISS), 173 to 194 (KEQA…QSSY), and 271 to 581 (NLNQ…PIST). Composition is skewed to polar residues over residues 138-157 (GTQN…GISS) and 174-194 (EQAS…QSSY). Basic and acidic residues predominate over residues 291-310 (HTEERQLNHGEKSVQKDISK). The segment covering 324–333 (KSQNQVTIHS) has biased composition (polar residues). Positions 334–344 (QDQEHGHKENK) are enriched in basic and acidic residues. Residues 366–396 (KSVSKGSISIQTEEQIHGKSQNQVRIPSQAQ) are compositionally biased toward polar residues. 2 stretches are compositionally biased toward basic and acidic residues: residues 412–425 (TEER…KDIQ) and 455–464 (DQEHGHKENK). Polar residues-rich tracts occupy residues 481–497 (GKNT…SFQT) and 505–529 (SQIQ…SGQS). Basic and acidic residues-rich tracts occupy residues 530 to 545 (ADRE…KGRY) and 558 to 581 (TEHE…PIST).

It belongs to the semenogelin family. In terms of assembly, interacts with SERPINA5.

It localises to the secreted. Functionally, participates in the formation of a gel matrix (sperm coagulum) entrapping the accessory gland secretions and ejaculated spermatozoa. In Pongo abelii (Sumatran orangutan), this protein is Semenogelin-2 (SEMG2).